A 44-amino-acid chain; its full sequence is Endochitinase 1 (44 aa).

It belongs to the glycosyl hydrolase 19 family. Chitinase class I subfamily.

The catalysed reaction is Random endo-hydrolysis of N-acetyl-beta-D-glucosaminide (1-&gt;4)-beta-linkages in chitin and chitodextrins.. Functionally, defense against chitin-containing fungal pathogens. The chain is Endochitinase 1 from Capsicum chinense (Scotch bonnet).